The primary structure comprises 383 residues: Acetylornithine deacetylase (383 aa).

A Zn(2+)-binding site is contributed by histidine 80. Residue aspartate 82 is part of the active site. Aspartate 112 contacts Zn(2+). Glutamate 144 is a catalytic residue. Residues glutamate 145, glutamate 169, and histidine 355 each contribute to the Zn(2+) site.

Belongs to the peptidase M20A family. ArgE subfamily. Homodimer. Zn(2+) serves as cofactor. Co(2+) is required as a cofactor. It depends on glutathione as a cofactor.

The protein resides in the cytoplasm. It carries out the reaction N(2)-acetyl-L-ornithine + H2O = L-ornithine + acetate. Its pathway is amino-acid biosynthesis; L-arginine biosynthesis; L-ornithine from N(2)-acetyl-L-ornithine (linear): step 1/1. In terms of biological role, catalyzes the hydrolysis of the amide bond of N(2)-acetylated L-amino acids. Cleaves the acetyl group from N-acetyl-L-ornithine to form L-ornithine, an intermediate in L-arginine biosynthesis pathway, and a branchpoint in the synthesis of polyamines. The sequence is that of Acetylornithine deacetylase from Escherichia coli (strain SMS-3-5 / SECEC).